A 204-amino-acid polypeptide reads, in one-letter code: Thymidylate kinase (204 aa).

11-18 (GLDKSGKT) is a binding site for ATP.

The protein belongs to the thymidylate kinase family.

It carries out the reaction dTMP + ATP = dTDP + ADP. It participates in pyrimidine metabolism; dTTP biosynthesis. This Ectromelia virus (strain Moscow) (ECTV) protein is Thymidylate kinase (TMK).